The following is a 26-amino-acid chain: Guentherin (26 aa).

Expressed by the skin glands.

The protein localises to the secreted. Its function is as follows. Antimicrobial peptide. Active against the Gram-positive bacteria S.aureus FDA209P (MIC=35.5 ug/ml) and B.subtilis ATCC 6633 (MIC&gt;64 ug/ml), but not active against the Gram-negative bacterium E.coli or the fungus C.albicans. The polypeptide is Guentherin (Sylvirana guentheri (Gunther's frog)).